The chain runs to 362 residues: Probable dual-specificity RNA methyltransferase RlmN (362 aa).

The Proton acceptor role is filled by Glu105. The region spanning His111–Asp344 is the Radical SAM core domain. The cysteines at positions 118 and 349 are disulfide-linked. Residues Cys125, Cys129, and Cys132 each contribute to the [4Fe-4S] cluster site. S-adenosyl-L-methionine-binding positions include Gly175–Glu176, Ser207, Ser230–His232, and Asn306. Cys349 acts as the S-methylcysteine intermediate in catalysis.

The protein belongs to the radical SAM superfamily. RlmN family. The cofactor is [4Fe-4S] cluster.

The protein localises to the cytoplasm. It catalyses the reaction adenosine(2503) in 23S rRNA + 2 reduced [2Fe-2S]-[ferredoxin] + 2 S-adenosyl-L-methionine = 2-methyladenosine(2503) in 23S rRNA + 5'-deoxyadenosine + L-methionine + 2 oxidized [2Fe-2S]-[ferredoxin] + S-adenosyl-L-homocysteine. It carries out the reaction adenosine(37) in tRNA + 2 reduced [2Fe-2S]-[ferredoxin] + 2 S-adenosyl-L-methionine = 2-methyladenosine(37) in tRNA + 5'-deoxyadenosine + L-methionine + 2 oxidized [2Fe-2S]-[ferredoxin] + S-adenosyl-L-homocysteine. Specifically methylates position 2 of adenine 2503 in 23S rRNA and position 2 of adenine 37 in tRNAs. The polypeptide is Probable dual-specificity RNA methyltransferase RlmN (Bacillus anthracis (strain CDC 684 / NRRL 3495)).